The following is a 92-amino-acid chain: Alpha-conotoxin-like Rt20.2 (92 aa).

The first 24 residues, 1–24 (MPKLEMMLLVLLILPLSYFSAAGG), serve as a signal peptide directing secretion. A propeptide spanning residues 25–45 (QVVQGDLHSDVLARYLQRGDR) is cleaved from the precursor. Glu-49 bears the 4-carboxyglutamate mark. Pro-55 carries the 4-hydroxyproline modification. Disulfide bonds link Cys-63-Cys-72, Cys-68-Cys-80, Cys-73-Cys-90, and Cys-78-Cys-92.

The protein belongs to the conotoxin D superfamily. As to quaternary structure, hetero-, homo- or pseudo-homodimer (identical sequence, different post-translational modifications). Expressed by the venom duct.

It is found in the secreted. In terms of biological role, alpha-conotoxins act on postsynaptic membranes, they bind to the nicotinic acetylcholine receptors (nAChR) and thus inhibit them. Through its two C-terminal domains, this homodimeric protein would bind to two nAChR allosteric sites, located outside the nAChR C-loop of the principal binding face and at the adjacent binding interface in a clockwise direction. This toxin specifically blocks mammalian neuronal nAChR of the alpha-7/CHRNA7, alpha-3-beta-2/CHRNA3-CHRNB2 and alpha-4-beta-2/CHRNA4-CHRNB2 subtypes. This Conus rattus (Rat cone) protein is Alpha-conotoxin-like Rt20.2.